We begin with the raw amino-acid sequence, 295 residues long: NAD kinase (295 aa).

D74 (proton acceptor) is an active-site residue. NAD(+) is bound by residues 74 to 75 (DG), 148 to 149 (NE), R176, D178, and 189 to 194 (TAYAMS).

This sequence belongs to the NAD kinase family. Requires a divalent metal cation as cofactor.

It is found in the cytoplasm. The catalysed reaction is NAD(+) + ATP = ADP + NADP(+) + H(+). Its function is as follows. Involved in the regulation of the intracellular balance of NAD and NADP, and is a key enzyme in the biosynthesis of NADP. Catalyzes specifically the phosphorylation on 2'-hydroxyl of the adenosine moiety of NAD to yield NADP. In Acidithiobacillus ferrooxidans (strain ATCC 23270 / DSM 14882 / CIP 104768 / NCIMB 8455) (Ferrobacillus ferrooxidans (strain ATCC 23270)), this protein is NAD kinase.